Here is a 149-residue protein sequence, read N- to C-terminus: Large ribosomal subunit protein bL9 (149 aa).

Belongs to the bacterial ribosomal protein bL9 family.

Its function is as follows. Binds to the 23S rRNA. In Sulfurihydrogenibium sp. (strain YO3AOP1), this protein is Large ribosomal subunit protein bL9.